The chain runs to 693 residues: Protein-glutamine gamma-glutamyltransferase E (693 aa).

At alanine 2 the chain carries N-acetylalanine. Tyrosine 111 is modified (phosphotyrosine). Threonine 112 is modified (phosphothreonine). Ca(2+) is bound by residues alanine 222, asparagine 225, asparagine 227, aspartate 228, and asparagine 230. The active site involves cysteine 273. Positions 302, 304, 306, 308, and 325 each coordinate Ca(2+). Catalysis depends on residues histidine 331 and aspartate 354. Residues asparagine 394, serine 416, glutamate 444, and glutamate 449 each contribute to the Ca(2+) site.

This sequence belongs to the transglutaminase superfamily. Transglutaminase family. In terms of assembly, consists of two polypeptide chains, which are synthesized as a precursor form of a single polypeptide. Ca(2+) is required as a cofactor. Activated by proteolytic processing. In vitro activation is commonly achieved by cleavage with dispase, a neutral bacterial protease. Dispase cleavage site was proposed to lie between Ser-470 and Ser-471 or between Pro-465 and Phe-466. Physiological activation may be catalyzed by CTSL and, to a lesser extent, by CTSS, but not by CTSB, CTSD nor CTSV.

It is found in the cytoplasm. The catalysed reaction is L-glutaminyl-[protein] + L-lysyl-[protein] = [protein]-L-lysyl-N(6)-5-L-glutamyl-[protein] + NH4(+). Functionally, catalyzes the calcium-dependent formation of isopeptide cross-links between glutamine and lysine residues in various proteins, as well as the conjugation of polyamines to proteins. Involved in the formation of the cornified envelope (CE), a specialized component consisting of covalent cross-links of proteins beneath the plasma membrane of terminally differentiated keratinocytes. Catalyzes small proline-rich proteins (SPRR1 and SPRR2) and LOR cross-linking to form small interchain oligomers, which are further cross-linked by TGM1 onto the growing CE scaffold. In hair follicles, involved in cross-linking structural proteins to hardening the inner root sheath. The polypeptide is Protein-glutamine gamma-glutamyltransferase E (TGM3) (Homo sapiens (Human)).